The primary structure comprises 95 residues: uncharacterized protein (95 aa).

Residues 1 to 22 form the signal peptide; it reads MLPGFTMIITSLLLTFFREVEH. Residues 23 to 52 lie on the Extracellular side of the membrane; that stretch reads LLPECLTITNTPQRTLVLIQRFTLLQKVMT. Residues 53 to 69 traverse the membrane as a helical segment; sequence IHLLLSIGTLGSLFTLH. Topologically, residues 70-95 are cytoplasmic; sequence PQLLKTNLLQKLHKELNSNLDYLISC.

The protein resides in the host membrane. This is an uncharacterized protein from Acidianus bottle-shaped virus (isolate Italy/Pozzuoli) (ABV).